A 507-amino-acid polypeptide reads, in one-letter code: Iroquois-class homeodomain protein IRX-3 (507 aa).

A disordered region spans residues 19-39 (RPGAAGGGGGGSSAGGRSGPG). Positions 22 to 39 (AAGGGGGGSSAGGRSGPG) are enriched in gly residues. Positions 130–192 (DPSRPKNATR…NARRRLKKEN (63 aa)) form a DNA-binding region, homeobox; TALE-type. Disordered regions lie at residues 193–398 (KMTW…AAAA) and 416–468 (RPFP…SGTD). 2 stretches are compositionally biased toward acidic residues: residues 213–223 (REEEDEEEDEE) and 230–261 (EMEEEELAGEEEDTGGEGLADDDEDEEIDLEN). 2 stretches are compositionally biased toward pro residues: residues 314 to 342 (APPPPPVARAPASPPSPPSSLDPCAPAPA) and 418 to 428 (FPGPPAGPRPH). Residues S326 and S329 each carry the phosphoserine modification. The span at 436–460 (APQHLLGLPGAAGHPAAAAAAYARP) shows a compositional bias: low complexity.

The protein belongs to the TALE/IRO homeobox family. As to expression, expressed by neural progenitor cells in discrete domains of the ventral neural tube. Also expressed in specific and overlapping patterns with Irx1 and Irx2 in the developing and adult metanephric kidney. In the adult metanephros, renal expression is confined to the S3 segment of the proximal tubule, in the loop of Henle.

The protein resides in the nucleus. Functionally, transcription factor involved in SHH-dependent neural patterning. Together with NKX2-2 and NKX6-1 acts to restrict the generation of motor neurons to the appropriate region of the neural tube. Belongs to the class I proteins of neuronal progenitor factors, which are repressed by SHH signals. Involved in the transcriptional repression of MNX1 in non-motor neuron cells. Acts as a regulator of energy metabolism. This Mus musculus (Mouse) protein is Iroquois-class homeodomain protein IRX-3 (Irx3).